The chain runs to 124 residues: Large ribosomal subunit protein uL29 (124 aa).

Belongs to the universal ribosomal protein uL29 family.

The polypeptide is Large ribosomal subunit protein uL29 (RPL35) (Triticum aestivum (Wheat)).